The following is a 151-amino-acid chain: Large ribosomal subunit protein uL13 (151 aa).

This sequence belongs to the universal ribosomal protein uL13 family. Part of the 50S ribosomal subunit.

This protein is one of the early assembly proteins of the 50S ribosomal subunit, although it is not seen to bind rRNA by itself. It is important during the early stages of 50S assembly. This chain is Large ribosomal subunit protein uL13, found in Microchaete diplosiphon (Fremyella diplosiphon).